A 681-amino-acid chain; its full sequence is DNA ligase (681 aa).

NAD(+) is bound by residues D35–D39, S84–I85, and E121. The active-site N6-AMP-lysine intermediate is the K123. NAD(+)-binding residues include R144, E180, K300, and K324. Positions 418, 421, 436, and 442 each coordinate Zn(2+). Residues A601–A681 form the BRCT domain.

It belongs to the NAD-dependent DNA ligase family. LigA subfamily. Mg(2+) serves as cofactor. The cofactor is Mn(2+).

The catalysed reaction is NAD(+) + (deoxyribonucleotide)n-3'-hydroxyl + 5'-phospho-(deoxyribonucleotide)m = (deoxyribonucleotide)n+m + AMP + beta-nicotinamide D-nucleotide.. In terms of biological role, DNA ligase that catalyzes the formation of phosphodiester linkages between 5'-phosphoryl and 3'-hydroxyl groups in double-stranded DNA using NAD as a coenzyme and as the energy source for the reaction. It is essential for DNA replication and repair of damaged DNA. This Aromatoleum aromaticum (strain DSM 19018 / LMG 30748 / EbN1) (Azoarcus sp. (strain EbN1)) protein is DNA ligase.